We begin with the raw amino-acid sequence, 330 residues long: MTKIMFFGTRAYEKDMALRWGKKNNIDVTTSTELLSVDTVDQLKDYDGVTTMQFGKLEPEVYPKLESYGIKQIAQRTAGFDMYDLELAKKHEIIISNIPSYSPETIAEYSVSIALQLVRKFPTIEKRVQAHNFTWASPIMSRPVKNMTVAIIGTGRIGAATGKIYAGFGARVVGYDAYPNHSLSFLEYKETVEDAIKDADIISLHVPANKDSFHLFDNNMFKNVKKGAVLVNAARGAVINTPDLIEAVNNGTLSGAAIDTYENEANYFTFDCSNQTIDDPILLDLIRNENILVTPHIAFFSDEAVQNLVEGGLNAALSVINTGTCDTRLN.

Residues 156–157 (RI), Asp176, 206–207 (VP), 233–235 (AAR), and Asp259 each bind NAD(+). Arg235 is an active-site residue. Residue Glu264 is part of the active site. His296 (proton donor) is an active-site residue.

Belongs to the D-isomer specific 2-hydroxyacid dehydrogenase family.

It carries out the reaction (R)-lactate + NAD(+) = pyruvate + NADH + H(+). In Staphylococcus epidermidis (strain ATCC 35984 / DSM 28319 / BCRC 17069 / CCUG 31568 / BM 3577 / RP62A), this protein is D-lactate dehydrogenase (ldhD).